A 324-amino-acid chain; its full sequence is MATH domain and coiled-coil domain-containing protein At3g44790 (324 aa).

In terms of domain architecture, MATH spans 3-125 (YEKFTWVIKN…NNEVKIVVEV (123 aa)). Residues 241-309 (FKVDWLERKL…ALLEKEKAKS (69 aa)) adopt a coiled-coil conformation.

The polypeptide is MATH domain and coiled-coil domain-containing protein At3g44790 (Arabidopsis thaliana (Mouse-ear cress)).